The primary structure comprises 117 residues: Large ribosomal subunit protein uL22c (117 aa).

This sequence belongs to the universal ribosomal protein uL22 family. As to quaternary structure, part of the 50S ribosomal subunit.

It localises to the plastid. The protein resides in the chloroplast. Functionally, this protein binds specifically to 23S rRNA. Its function is as follows. The globular domain of the protein is located near the polypeptide exit tunnel on the outside of the subunit, while an extended beta-hairpin is found that lines the wall of the exit tunnel in the center of the 70S ribosome. This is Large ribosomal subunit protein uL22c (rpl22) from Pyropia yezoensis (Susabi-nori).